A 190-amino-acid chain; its full sequence is Threonylcarbamoyl-AMP synthase (190 aa).

Residues 7 to 190 enclose the YrdC-like domain; it reads LGSIAQAVDV…ALTGERFRQG (184 aa).

The protein belongs to the SUA5 family. TsaC subfamily.

It localises to the cytoplasm. The catalysed reaction is L-threonine + hydrogencarbonate + ATP = L-threonylcarbamoyladenylate + diphosphate + H2O. In terms of biological role, required for the formation of a threonylcarbamoyl group on adenosine at position 37 (t(6)A37) in tRNAs that read codons beginning with adenine. Catalyzes the conversion of L-threonine, HCO(3)(-)/CO(2) and ATP to give threonylcarbamoyl-AMP (TC-AMP) as the acyladenylate intermediate, with the release of diphosphate. The polypeptide is Threonylcarbamoyl-AMP synthase (Enterobacter sp. (strain 638)).